A 113-amino-acid chain; its full sequence is Small ribosomal subunit protein uS17 (113 aa).

Belongs to the universal ribosomal protein uS17 family. Part of the 30S ribosomal subunit.

Functionally, one of the primary rRNA binding proteins, it binds specifically to the 5'-end of 16S ribosomal RNA. The polypeptide is Small ribosomal subunit protein uS17 (Pyrococcus furiosus (strain ATCC 43587 / DSM 3638 / JCM 8422 / Vc1)).